The sequence spans 666 residues: Putative cysteine-rich receptor-like protein kinase 20 (666 aa).

Positions 1-23 (MSSLICFIFLFLFSFITSFTASA) are cleaved as a signal peptide. Topologically, residues 24-264 (QNPFYLYHNC…PRPGKGGNSS (241 aa)) are extracellular. Gnk2-homologous domains lie at 27-131 (FYLY…NRNI) and 137-241 (TDGG…NYEF). N-linked (GlcNAc...) asparagine glycosylation is found at Asn-32, Asn-42, Asn-60, Asn-69, and Asn-103. The N-linked (GlcNAc...) asparagine glycan is linked to Asn-262. A helical transmembrane segment spans residues 265–285 (VIVIAVVVPITVLFLLFVAFF). At 286–666 (SVRRAKRKKT…EASITSVAPR (381 aa)) the chain is on the cytoplasmic side. The region spanning 344-623 (FLPINKLGQG…QMLTTSSIAL (280 aa)) is the Protein kinase domain. ATP is bound by residues 350 to 358 (LGQGGFGEV) and Lys-372. Position 417 is a phosphotyrosine (Tyr-417). The Proton acceptor role is filled by Asp-469. Residue Thr-509 is modified to Phosphothreonine. The residue at position 517 (Tyr-517) is a Phosphotyrosine.

Belongs to the protein kinase superfamily. Ser/Thr protein kinase family. CRK subfamily.

It localises to the membrane. The catalysed reaction is L-seryl-[protein] + ATP = O-phospho-L-seryl-[protein] + ADP + H(+). The enzyme catalyses L-threonyl-[protein] + ATP = O-phospho-L-threonyl-[protein] + ADP + H(+). This is Putative cysteine-rich receptor-like protein kinase 20 (CRK20) from Arabidopsis thaliana (Mouse-ear cress).